A 1034-amino-acid chain; its full sequence is MVKEGKAMEIKEAFDLSQKAHQNHAKLVSSLRAAYNKTEDKSIFLEEFIHFLKFPLIVYRREPAVERVMDFVAKFVTSFHNSGGENEEEADEENSPVNCLFNFLLQSHGASSMAVRFRVCQLINKLLVNLPENAQIDDDLFDKIHDAMLIRLKDRVPNVRIQAVLALARLQDPSDPDCPVSNAYVHLLENDSNPEVRRAVLTCIAPSAKSLPKIVGRTMDVKEPVRKLAYQVLSEKVHIRALTIAQRVKLLQQGLNDRSAAVKDVIQKKLIQAWLQYSEGDVLDLLHRLDVENSPEVSLSALNALFSVSPVGELVQNCKNLDERKLIPVETLTPENVLYWRALCEHLKSKGDEGEAALENILPEPAVYARYLSSYLQTLPVLSEDQRADMTKIEDLMTKEFIGQQLILTIGCLDTSEEGGRKRLLAVLQEILVMQNTPTSLISSLAELLLFVLKDDDKRIQTVAEIISELREPIVTVDNPKDAAQSRKLQLKLADVKVQLIEAKQALEDSLTNEDYSRASELKEKVKELESLKTQLIKEAEEPEMKEIRVEKNDPETLLKCLIMCNELLKHLSLSKGLGGTLNEICESLILPGITNVHPSVRNMAVLCIGCCALQNKDFARQHLPLLLQILQLDEVKVKNSALNAVFDMLLLFGMDILKSKPTNPDDSQCKAQENADEDISEQEKPGSVDENLTNEEVQEETATVNGILHLFSGFLDSEIAEIRTETAEGLVKLMFSGRLISAKLLSRLILLWYNPVTEEDTKLRHCLGVFFPIFAYSCRSNQECFAEAFLPTLQTLFNAPASSPLADVDVANVAELLVDLTRPSGLNPQNKQSQDYQAAMVHDGLAIKICNEILKDPTAPDVRIYAKALCSLELSRENSTDLLPLLDCAVEDVTDKVCERAIEKVRSQLRSGREEHRVSKETEPQVSKETEDRTNLQENEEGKQKDEANCDENTDTVKEKAARGKATKGRRKGPAAAATRRKASKAEEAEAEMERQEESQCVPVNTRPSRRAKTAALEKTKKNLSKLLNEEAN.

HEAT repeat units follow at residues 95 to 132 (SPVN…NLPE), 139 to 176 (DLFD…PSDP), 178 to 213 (CPVS…SLPK), 242 to 279 (LTIA…QYSE), 281 to 317 (DVLD…LVQN), 439 to 476 (TSLI…PIVT), and 618 to 655 (DFAR…LFGM). The span at 663 to 672 (TNPDDSQCKA) shows a compositional bias: polar residues. The disordered stretch occupies residues 663-693 (TNPDDSQCKAQENADEDISEQEKPGSVDENL). HEAT repeat units follow at residues 703–740 (ATVN…SGRL), 785–823 (CFAE…DLTR), and 878–915 (ENST…SGRE). The segment covering 909-949 (QLRSGREEHRVSKETEPQVSKETEDRTNLQENEEGKQKDEA) has biased composition (basic and acidic residues). The disordered stretch occupies residues 909–1034 (QLRSGREEHR…LSKLLNEEAN (126 aa)). The segment covering 964–984 (RGKATKGRRKGPAAAATRRKA) has biased composition (basic residues). Positions 985 to 999 (SKAEEAEAEMERQEE) are enriched in basic and acidic residues.

Belongs to the CND3 (condensin subunit 3) family. Component of the condensin complex, which contains the XCAP-E/SMC2 and XCAP-C/SMC4 heterodimer, and three non SMC subunits that probably regulate the complex: XCAP-H/NCAPH, XCAP-D2/NCAPD2 and XCAP-G/NCAPG. Phosphorylated by cdk1. Its phosphorylation, as well as that of XCAP-D2 and XCAP-H subunits, activates the condensin complex and is required for chromosome condensation.

The protein resides in the nucleus. It localises to the cytoplasm. Its subcellular location is the chromosome. In terms of biological role, regulatory subunit of the condensin complex, a complex required for conversion of interphase chromatin into mitotic-like condense chromosomes. The condensin complex probably introduces positive supercoils into relaxed DNA in the presence of type I topoisomerases and converts nicked DNA into positive knotted forms in the presence of type II topoisomerase. The polypeptide is Condensin complex subunit 3 (ncapg) (Xenopus laevis (African clawed frog)).